A 1400-amino-acid chain; its full sequence is DNA-directed RNA polymerase subunit beta' (1400 aa).

Zn(2+) is bound by residues Cys-71, Cys-73, Cys-86, and Cys-89. Mg(2+) contacts are provided by Asp-462, Asp-464, and Asp-466. Cys-811, Cys-885, Cys-892, and Cys-895 together coordinate Zn(2+).

Belongs to the RNA polymerase beta' chain family. As to quaternary structure, the RNAP catalytic core consists of 2 alpha, 1 beta, 1 beta' and 1 omega subunit. When a sigma factor is associated with the core the holoenzyme is formed, which can initiate transcription. It depends on Mg(2+) as a cofactor. The cofactor is Zn(2+).

It catalyses the reaction RNA(n) + a ribonucleoside 5'-triphosphate = RNA(n+1) + diphosphate. In terms of biological role, DNA-dependent RNA polymerase catalyzes the transcription of DNA into RNA using the four ribonucleoside triphosphates as substrates. In Brucella suis (strain ATCC 23445 / NCTC 10510), this protein is DNA-directed RNA polymerase subunit beta'.